Consider the following 529-residue polypeptide: Peptide chain release factor 3 (529 aa).

The tr-type G domain maps to A11 to M280. Residues S20–T27, D88–H92, and N142–D145 each bind GTP.

Belongs to the TRAFAC class translation factor GTPase superfamily. Classic translation factor GTPase family. PrfC subfamily.

The protein resides in the cytoplasm. Functionally, increases the formation of ribosomal termination complexes and stimulates activities of RF-1 and RF-2. It binds guanine nucleotides and has strong preference for UGA stop codons. It may interact directly with the ribosome. The stimulation of RF-1 and RF-2 is significantly reduced by GTP and GDP, but not by GMP. The polypeptide is Peptide chain release factor 3 (Salmonella arizonae (strain ATCC BAA-731 / CDC346-86 / RSK2980)).